The primary structure comprises 124 residues: KETAAEKFQRQHMDTSSSLSNDSNYCNQMMVRRNMTQDRCKPVNTFVHESEADVKAVCSQKNVTCKNGQTNCYQSNSTMHITDCRETGSSKYPNCAYKTSQLQKHIIVACEGDPYVPVHYDASV.

Over residues 1–13 (KETAAEKFQRQHM) the composition is skewed to basic and acidic residues. Residues 1–21 (KETAAEKFQRQHMDTSSSLSN) form a disordered region. Substrate contacts are provided by Lys7 and Arg10. His12 functions as the Proton acceptor in the catalytic mechanism. Disulfide bonds link Cys26–Cys84, Cys40–Cys95, Cys58–Cys110, and Cys65–Cys72. A glycan (N-linked (GlcNAc...) asparagine) is linked at Asn34. Residues 41–45 (KPVNT), Lys66, and Arg85 each bind substrate. The active-site Proton donor is the His119.

Belongs to the pancreatic ribonuclease family. In terms of assembly, monomer. Interacts with and forms tight 1:1 complexes with RNH1. Dimerization of two such complexes may occur. Interaction with RNH1 inhibits this protein. Pancreas.

The protein localises to the secreted. The catalysed reaction is an [RNA] containing cytidine + H2O = an [RNA]-3'-cytidine-3'-phosphate + a 5'-hydroxy-ribonucleotide-3'-[RNA].. The enzyme catalyses an [RNA] containing uridine + H2O = an [RNA]-3'-uridine-3'-phosphate + a 5'-hydroxy-ribonucleotide-3'-[RNA].. In terms of biological role, endonuclease that catalyzes the cleavage of RNA on the 3' side of pyrimidine nucleotides. Acts on single-stranded and double-stranded RNA. This chain is Ribonuclease pancreatic (RNASE1), found in Hippopotamus amphibius (Hippopotamus).